The chain runs to 147 residues: SsrA-binding protein (147 aa).

This sequence belongs to the SmpB family.

Its subcellular location is the cytoplasm. In terms of biological role, required for rescue of stalled ribosomes mediated by trans-translation. Binds to transfer-messenger RNA (tmRNA), required for stable association of tmRNA with ribosomes. tmRNA and SmpB together mimic tRNA shape, replacing the anticodon stem-loop with SmpB. tmRNA is encoded by the ssrA gene; the 2 termini fold to resemble tRNA(Ala) and it encodes a 'tag peptide', a short internal open reading frame. During trans-translation Ala-aminoacylated tmRNA acts like a tRNA, entering the A-site of stalled ribosomes, displacing the stalled mRNA. The ribosome then switches to translate the ORF on the tmRNA; the nascent peptide is terminated with the 'tag peptide' encoded by the tmRNA and targeted for degradation. The ribosome is freed to recommence translation, which seems to be the essential function of trans-translation. This Mycoplasmopsis agalactiae (strain NCTC 10123 / CIP 59.7 / PG2) (Mycoplasma agalactiae) protein is SsrA-binding protein.